Consider the following 340-residue polypeptide: MVAQIKDKLGRPIRDLRISVTDRCNFRCDYCMPKEIFGDDYVFLPKDELLTFEEMVRIAKVYAELGVKKLRITGGEPLLRRNLYQLIAELNQIDGIEDIGMTTNGLLLKKHGQKLYDAGLRRINVSLDAIDNEVFQAINNRNIKATTILDQIDYAVSIGFHVKVNVVIQKGINDDQIIPMVDYFKDKNIEIRFIEFMDVGNDNGWDFSKVVTKNEMLDMIESHFDIEPVPPKYFGEVAKYYKHKDNGAQFGLITSVSASFCSTCTRARLSSDGKFYGCLFSTVEGFNIKSFIRSGVTDDELREQLITLWNVRDDRYSDERTEQTVKNRQRKKINMNYIGG.

Residues 8-227 (KLGRPIRDLR…DMIESHFDIE (220 aa)) enclose the Radical SAM core domain. Arg17 provides a ligand contact to GTP. [4Fe-4S] cluster is bound by residues Cys24 and Cys28. Tyr30 lines the S-adenosyl-L-methionine pocket. Residue Cys31 coordinates [4Fe-4S] cluster. Arg71 is a GTP binding site. Gly75 provides a ligand contact to S-adenosyl-L-methionine. Thr102 serves as a coordination point for GTP. Residue Ser126 coordinates S-adenosyl-L-methionine. Residue Lys163 participates in GTP binding. Met197 contacts S-adenosyl-L-methionine. Residues Cys261 and Cys264 each contribute to the [4Fe-4S] cluster site. 266-268 (RAR) is a GTP binding site. Cys278 contributes to the [4Fe-4S] cluster binding site.

It belongs to the radical SAM superfamily. MoaA family. As to quaternary structure, monomer and homodimer. The cofactor is [4Fe-4S] cluster.

It catalyses the reaction GTP + AH2 + S-adenosyl-L-methionine = (8S)-3',8-cyclo-7,8-dihydroguanosine 5'-triphosphate + 5'-deoxyadenosine + L-methionine + A + H(+). Its pathway is cofactor biosynthesis; molybdopterin biosynthesis. Functionally, catalyzes the cyclization of GTP to (8S)-3',8-cyclo-7,8-dihydroguanosine 5'-triphosphate. This chain is GTP 3',8-cyclase, found in Staphylococcus haemolyticus (strain JCSC1435).